A 273-amino-acid chain; its full sequence is 2-dehydro-3-deoxyphosphooctonate aldolase (273 aa).

The protein belongs to the KdsA family.

The protein localises to the cytoplasm. The enzyme catalyses D-arabinose 5-phosphate + phosphoenolpyruvate + H2O = 3-deoxy-alpha-D-manno-2-octulosonate-8-phosphate + phosphate. It participates in carbohydrate biosynthesis; 3-deoxy-D-manno-octulosonate biosynthesis; 3-deoxy-D-manno-octulosonate from D-ribulose 5-phosphate: step 2/3. Its pathway is bacterial outer membrane biogenesis; lipopolysaccharide biosynthesis. This Cyanothece sp. (strain PCC 7425 / ATCC 29141) protein is 2-dehydro-3-deoxyphosphooctonate aldolase.